Consider the following 420-residue polypeptide: Diaminopimelate decarboxylase (420 aa).

K54 is modified (N6-(pyridoxal phosphate)lysine). H191 is a substrate binding site. Pyridoxal 5'-phosphate-binding positions include G227 and 268-271 (EPGR). Substrate is bound by residues R271, R307, and Y311. The Proton donor role is filled by C342. Residues E343 and Y378 each contribute to the substrate site. Y378 provides a ligand contact to pyridoxal 5'-phosphate.

The protein belongs to the Orn/Lys/Arg decarboxylase class-II family. LysA subfamily. The cofactor is pyridoxal 5'-phosphate.

The enzyme catalyses meso-2,6-diaminopimelate + H(+) = L-lysine + CO2. Its pathway is amino-acid biosynthesis; L-lysine biosynthesis via DAP pathway; L-lysine from DL-2,6-diaminopimelate: step 1/1. Is activated by 2,3-dimercaptopropan-1-ol. Specifically catalyzes the decarboxylation of meso-diaminopimelate (meso-DAP) to L-lysine. Is not active against the DD- or LL-isomers of diaminopimelate. This chain is Diaminopimelate decarboxylase, found in Escherichia coli (strain K12).